We begin with the raw amino-acid sequence, 984 residues long: UPF0592 protein YDL073W (984 aa).

The tract at residues K675 to S712 is disordered. The segment covering Q687–D698 has biased composition (acidic residues).

The protein belongs to the UPF0592 family.

The polypeptide is UPF0592 protein YDL073W (Saccharomyces cerevisiae (strain ATCC 204508 / S288c) (Baker's yeast)).